A 187-amino-acid polypeptide reads, in one-letter code: Protein GrpE (187 aa).

It belongs to the GrpE family. As to quaternary structure, homodimer.

The protein localises to the cytoplasm. Participates actively in the response to hyperosmotic and heat shock by preventing the aggregation of stress-denatured proteins, in association with DnaK and GrpE. It is the nucleotide exchange factor for DnaK and may function as a thermosensor. Unfolded proteins bind initially to DnaJ; upon interaction with the DnaJ-bound protein, DnaK hydrolyzes its bound ATP, resulting in the formation of a stable complex. GrpE releases ADP from DnaK; ATP binding to DnaK triggers the release of the substrate protein, thus completing the reaction cycle. Several rounds of ATP-dependent interactions between DnaJ, DnaK and GrpE are required for fully efficient folding. The polypeptide is Protein GrpE (Albidiferax ferrireducens (strain ATCC BAA-621 / DSM 15236 / T118) (Rhodoferax ferrireducens)).